Consider the following 466-residue polypeptide: Acetyl-coenzyme A carboxylase carboxyl transferase subunit beta, chloroplastic (466 aa).

One can recognise a CoA carboxyltransferase N-terminal domain in the interval 198-466 (LWIQCENCYE…FPLNQNSIGQ (269 aa)). C202, C205, C221, and C224 together coordinate Zn(2+). Residues 202–224 (CENCYELNYKKLLKSKMRICDEC) form a C4-type zinc finger.

Belongs to the AccD/PCCB family. In terms of assembly, acetyl-CoA carboxylase is a heterohexamer composed of biotin carboxyl carrier protein, biotin carboxylase and 2 subunits each of ACCase subunit alpha and ACCase plastid-coded subunit beta (accD). Zn(2+) serves as cofactor.

The protein localises to the plastid. The protein resides in the chloroplast stroma. It carries out the reaction N(6)-carboxybiotinyl-L-lysyl-[protein] + acetyl-CoA = N(6)-biotinyl-L-lysyl-[protein] + malonyl-CoA. Its pathway is lipid metabolism; malonyl-CoA biosynthesis; malonyl-CoA from acetyl-CoA: step 1/1. Component of the acetyl coenzyme A carboxylase (ACC) complex. Biotin carboxylase (BC) catalyzes the carboxylation of biotin on its carrier protein (BCCP) and then the CO(2) group is transferred by the transcarboxylase to acetyl-CoA to form malonyl-CoA. The sequence is that of Acetyl-coenzyme A carboxylase carboxyl transferase subunit beta, chloroplastic from Fagopyrum esculentum subsp. ancestrale (Wild buckwheat).